Here is a 235-residue protein sequence, read N- to C-terminus: Eukaryotic translation initiation factor 4E-1 (235 aa).

The disordered stretch occupies residues 1–36; the sequence is MVVEETIKATSTEDLSNTIANQNPRGRGGDEDEELE. The span at 8–24 shows a compositional bias: polar residues; it reads KATSTEDLSNTIANQNP. EIF4G-binding stretches follow at residues 60–63 and 70–106; these read HPLE and FDNP…NNIH. Residues 78–83, Lys110, and 128–129 each bind mRNA; these read KQATWG and WE. Residues Cys133 and Cys171 are joined by a disulfide bond. An EIF4G-binding region spans residues 154 to 163; the sequence is YTLLAMIGEQ. MRNA is bound by residues 178 to 183 and 223 to 227; these read RSGQDK and KKFDR.

It belongs to the eukaryotic initiation factor 4E family. As to quaternary structure, EIF4F is a multi-subunit complex, the composition of which varies with external and internal environmental conditions. It is composed of at least EIF4A, EIF4E and EIF4G. EIF4E is also known to interact with other partners. In higher plants two isoforms of EIF4F have been identified, named isoform EIF4F and isoform EIF(iso)4F. Isoform EIF4F has subunits p220 and p26, whereas isoform EIF(iso)4F has subunits p82 and p28. (Microbial infection) Interacts with potyvirus viral genome-linked protein (VPg); this interaction is possible in susceptible hosts but impaired in resistant plants. Post-translationally, according to the redox status, the Cys-133-Cys-171 disulfide bridge may have a role in regulating protein function by affecting its ability to bind capped mRNA.

Its subcellular location is the nucleus. The protein resides in the cytoplasm. In terms of biological role, component of the protein complex eIF4F, which is involved in the recognition of the mRNA cap, ATP-dependent unwinding of 5'-terminal secondary structure and recruitment of mRNA to the ribosome. Recognizes and binds the 7-methylguanosine-containing mRNA cap during an early step in the initiation of protein synthesis and facilitates ribosome binding by inducing the unwinding of the mRNAs secondary structures. Key component of recessive resistance to potyviruses. Its function is as follows. (Microbial infection) Susceptibility host factor required for viral infection by recruiting viral RNAs to the host ribosomal complex via an interaction with viral genome-linked protein (VPg). This Citrullus lanatus (Watermelon) protein is Eukaryotic translation initiation factor 4E-1.